A 322-amino-acid chain; its full sequence is Ribosomal RNA small subunit methyltransferase H (322 aa).

S-adenosyl-L-methionine is bound by residues 34–36 (GGH), Asp59, Phe86, Asp112, and Gln119.

It belongs to the methyltransferase superfamily. RsmH family.

The protein resides in the cytoplasm. It catalyses the reaction cytidine(1402) in 16S rRNA + S-adenosyl-L-methionine = N(4)-methylcytidine(1402) in 16S rRNA + S-adenosyl-L-homocysteine + H(+). In terms of biological role, specifically methylates the N4 position of cytidine in position 1402 (C1402) of 16S rRNA. The chain is Ribosomal RNA small subunit methyltransferase H from Chlorobium limicola (strain DSM 245 / NBRC 103803 / 6330).